A 170-amino-acid chain; its full sequence is Ubiquitin-conjugating enzyme E2 J2-like (170 aa).

Residues 15-165 (DCITRLKREF…NKTFCELFPY (151 aa)) enclose the UBC core domain. C97 (glycyl thioester intermediate) is an active-site residue.

Belongs to the ubiquitin-conjugating enzyme family.

It catalyses the reaction S-ubiquitinyl-[E1 ubiquitin-activating enzyme]-L-cysteine + [E2 ubiquitin-conjugating enzyme]-L-cysteine = [E1 ubiquitin-activating enzyme]-L-cysteine + S-ubiquitinyl-[E2 ubiquitin-conjugating enzyme]-L-cysteine.. The protein operates within protein modification; protein ubiquitination. In terms of biological role, catalyzes the covalent attachment of ubiquitin to other proteins. This is Ubiquitin-conjugating enzyme E2 J2-like from Dictyostelium discoideum (Social amoeba).